Consider the following 441-residue polypeptide: Proline--tRNA ligase (441 aa).

The protein belongs to the class-II aminoacyl-tRNA synthetase family. ProS type 2 subfamily. As to quaternary structure, homodimer.

The protein resides in the cytoplasm. The catalysed reaction is tRNA(Pro) + L-proline + ATP = L-prolyl-tRNA(Pro) + AMP + diphosphate. Catalyzes the attachment of proline to tRNA(Pro) in a two-step reaction: proline is first activated by ATP to form Pro-AMP and then transferred to the acceptor end of tRNA(Pro). The protein is Proline--tRNA ligase of Bartonella quintana (strain Toulouse) (Rochalimaea quintana).